Here is a 567-residue protein sequence, read N- to C-terminus: MLNLTLAQLNFTVGDVEGNKEKILKVIDEYSEKSHIIAFPELSLSGYPPEDLLLQPHFLKECEKAFDQIIHHTRNYDVIVAVGLPYYEFDLYNALAVIHRGEVLGIYKKHFLPNYSVFDEYRYFRKGEEPLMIEVNGHKVSFSICEDIWYPDGVERQTALSGAELIVNVNASPYHVNKYSFKESFLKSRAEDNLCFVAYVNLVGGQDELVFDGRSIVISPFGKLVARAKAFEEDILTVTLDLGEAKRKRLLDLRWREGSYGREKVNVKRSVSLPDKEFFRGRIEENPKEEEEIYAALKLSLRDYVRKNGFEKVVLGLSGGIDSSFVACLAVDALGRENVKGVYMPSQFSSKESYEDAKALAQNLGIEFHVIPIKEIYRAYFNEFEKEICEITFDVADENIQARIRANILFYFSNKFRYLVLSTSNKSETAVGYTTIYGDMAGGFAPIKDVYKTWVYKLARYRNSISPDIPERVFKKPPSAELRPNQTDQDVLPPYEILDQILMLYIEENLSPEEIIRKGLPRDAVYKTINMIRKNEYKRKQAPIGPKITSRAFGKDWRMPVTNKFFK.

Residues Leu2 to Leu242 form the CN hydrolase domain. Glu41 acts as the Proton acceptor; for glutaminase activity in catalysis. The active-site For glutaminase activity is Lys109. An L-glutamine-binding site is contributed by Tyr115. Cys145 serves as the catalytic Nucleophile; for glutaminase activity. Residues Ser172 and Lys178 each contribute to the L-glutamine site. Residues Pro287–Lys567 are ligase. Position 316 to 323 (Gly316 to Ser323) interacts with ATP. A deamido-NAD(+)-binding site is contributed by Asn399. ATP is bound at residue Thr423. Residues Glu428 and Lys538 each contribute to the deamido-NAD(+) site.

It in the C-terminal section; belongs to the NAD synthetase family.

It catalyses the reaction deamido-NAD(+) + L-glutamine + ATP + H2O = L-glutamate + AMP + diphosphate + NAD(+) + H(+). It participates in cofactor biosynthesis; NAD(+) biosynthesis; NAD(+) from deamido-NAD(+) (L-Gln route): step 1/1. Its function is as follows. Catalyzes the ATP-dependent amidation of deamido-NAD to form NAD. Uses L-glutamine as a nitrogen source. This is Glutamine-dependent NAD(+) synthetase from Aquifex aeolicus (strain VF5).